The sequence spans 65 residues: Large ribosomal subunit protein bL32 (65 aa).

Belongs to the bacterial ribosomal protein bL32 family.

The polypeptide is Large ribosomal subunit protein bL32 (Phytoplasma australiense).